Consider the following 684-residue polypeptide: Glycine--tRNA ligase beta subunit (684 aa).

It belongs to the class-II aminoacyl-tRNA synthetase family. As to quaternary structure, tetramer of two alpha and two beta subunits.

It is found in the cytoplasm. The catalysed reaction is tRNA(Gly) + glycine + ATP = glycyl-tRNA(Gly) + AMP + diphosphate. The protein is Glycine--tRNA ligase beta subunit of Pseudomonas syringae pv. syringae (strain B728a).